A 39-amino-acid chain; its full sequence is Photosystem II reaction center protein J (39 aa).

Residues 7–27 traverse the membrane as a helical segment; sequence IPLWIVAVVAGMGVIAVVGIF.

The protein belongs to the PsbJ family. In terms of assembly, PSII is composed of 1 copy each of membrane proteins PsbA, PsbB, PsbC, PsbD, PsbE, PsbF, PsbH, PsbI, PsbJ, PsbK, PsbL, PsbM, PsbT, PsbX, PsbY, PsbZ, Psb30/Ycf12, peripheral proteins PsbO, CyanoQ (PsbQ), PsbU, PsbV and a large number of cofactors. It forms dimeric complexes.

Its subcellular location is the cellular thylakoid membrane. In terms of biological role, this protein is a component of the reaction center of photosystem II. Its function is as follows. One of the components of the core complex of photosystem II (PSII). PSII is a light-driven water:plastoquinone oxidoreductase that uses light energy to abstract electrons from H(2)O, generating O(2) and a proton gradient subsequently used for ATP formation. It consists of a core antenna complex that captures photons, and an electron transfer chain that converts photonic excitation into a charge separation. In Picosynechococcus sp. (strain ATCC 27264 / PCC 7002 / PR-6) (Agmenellum quadruplicatum), this protein is Photosystem II reaction center protein J.